The sequence spans 286 residues: ATP synthase gamma chain (286 aa).

The protein belongs to the ATPase gamma chain family. As to quaternary structure, F-type ATPases have 2 components, CF(1) - the catalytic core - and CF(0) - the membrane proton channel. CF(1) has five subunits: alpha(3), beta(3), gamma(1), delta(1), epsilon(1). CF(0) has three main subunits: a, b and c.

Its subcellular location is the cell inner membrane. Functionally, produces ATP from ADP in the presence of a proton gradient across the membrane. The gamma chain is believed to be important in regulating ATPase activity and the flow of protons through the CF(0) complex. In Pseudomonas fluorescens (strain ATCC BAA-477 / NRRL B-23932 / Pf-5), this protein is ATP synthase gamma chain.